Here is a 1407-residue protein sequence, read N- to C-terminus: DNA-directed RNA polymerase subunit beta' (1407 aa).

Zn(2+) is bound by residues Cys-70, Cys-72, Cys-85, and Cys-88. Mg(2+) is bound by residues Asp-460, Asp-462, and Asp-464. Zn(2+)-binding residues include Cys-814, Cys-888, Cys-895, and Cys-898. Position 972 is an N6-acetyllysine (Lys-972).

This sequence belongs to the RNA polymerase beta' chain family. In terms of assembly, the RNAP catalytic core consists of 2 alpha, 1 beta, 1 beta' and 1 omega subunit. When a sigma factor is associated with the core the holoenzyme is formed, which can initiate transcription. Mg(2+) serves as cofactor. Zn(2+) is required as a cofactor.

The catalysed reaction is RNA(n) + a ribonucleoside 5'-triphosphate = RNA(n+1) + diphosphate. DNA-dependent RNA polymerase catalyzes the transcription of DNA into RNA using the four ribonucleoside triphosphates as substrates. This is DNA-directed RNA polymerase subunit beta' from Shigella sonnei (strain Ss046).